Consider the following 429-residue polypeptide: Oxysterol-binding protein-like protein OBPalpha (429 aa).

Belongs to the OSBP family.

The polypeptide is Oxysterol-binding protein-like protein OBPalpha (OBPALPHA) (Candida albicans (strain SC5314 / ATCC MYA-2876) (Yeast)).